The following is a 387-amino-acid chain: Queuine tRNA-ribosyltransferase (387 aa).

Residue Asp102 is the Proton acceptor of the active site. Residues 102–106 (DSGGF), Asp156, Gln205, and Gly232 each bind substrate. An RNA binding region spans residues 263-269 (GVGTPED). Asp282 serves as the catalytic Nucleophile. The interval 287–291 (TRNAR) is RNA binding; important for wobble base 34 recognition. 4 residues coordinate Zn(2+): Cys320, Cys322, Cys325, and His351.

This sequence belongs to the queuine tRNA-ribosyltransferase family. In terms of assembly, homodimer. Within each dimer, one monomer is responsible for RNA recognition and catalysis, while the other monomer binds to the replacement base PreQ1. The cofactor is Zn(2+).

It catalyses the reaction 7-aminomethyl-7-carbaguanine + guanosine(34) in tRNA = 7-aminomethyl-7-carbaguanosine(34) in tRNA + guanine. Its pathway is tRNA modification; tRNA-queuosine biosynthesis. In terms of biological role, catalyzes the base-exchange of a guanine (G) residue with the queuine precursor 7-aminomethyl-7-deazaguanine (PreQ1) at position 34 (anticodon wobble position) in tRNAs with GU(N) anticodons (tRNA-Asp, -Asn, -His and -Tyr). Catalysis occurs through a double-displacement mechanism. The nucleophile active site attacks the C1' of nucleotide 34 to detach the guanine base from the RNA, forming a covalent enzyme-RNA intermediate. The proton acceptor active site deprotonates the incoming PreQ1, allowing a nucleophilic attack on the C1' of the ribose to form the product. After dissociation, two additional enzymatic reactions on the tRNA convert PreQ1 to queuine (Q), resulting in the hypermodified nucleoside queuosine (7-(((4,5-cis-dihydroxy-2-cyclopenten-1-yl)amino)methyl)-7-deazaguanosine). This Polaromonas naphthalenivorans (strain CJ2) protein is Queuine tRNA-ribosyltransferase.